The chain runs to 490 residues: MARFELQKLYIDGGYVDASNTETFDAINPANGEVLAQIQRAGKEDVERAVVAAEKGQKIWAAMTAVERSRILRRAVDILRERNDELAALETLDTGKAISETRYVDIVTGADVLEYYAGLVPAIEGEQIPLRDSSFVYTRREPLGVVAGIGAWNYPIQIALWKSAPALAAGNAMIFKPSEVTSLTTLKLAEIYTEAGVPNGVFNVLTGSGREVGTWITEHPRIEKVSFTGGTDTGKKVMASASSSSLKEVTMELGGKSPLIVFDDADLDRAADIAMMANFYSSGQVCTNGTRVFVPNALKAEFEAKILERVKRIRAGNPEDENINFGPLVSFEHMESVLGYIAKGKEQGARLLCGGDRLTGGVFDKGAFVAPTVFTDCTDEMTIVREEIFGPVMSILGYDTEEEVVRRANDTDFGLAAGIVTRDLNRAHRVIHLLEAGICWINAWGESAAQMPVGGYKQSGVGRENGISSLAQYTRIKSVQIELGDYASVF.

K(+) is bound by residues Ile27 and Asp93. 150–152 serves as a coordination point for NAD(+); it reads GAW. Lys162 (charge relay system) is an active-site residue. 176 to 179 lines the NAD(+) pocket; it reads KPSE. A K(+)-binding site is contributed by Val180. 230–233 provides a ligand contact to NAD(+); the sequence is GTDT. Residue Leu246 participates in K(+) binding. Glu252 acts as the Proton acceptor in catalysis. 3 residues coordinate NAD(+): Gly254, Cys286, and Glu387. Cys286 functions as the Nucleophile in the catalytic mechanism. The residue at position 286 (Cys286) is a Cysteine sulfenic acid (-SOH). K(+) is bound by residues Lys457 and Gly460. Glu464 functions as the Charge relay system in the catalytic mechanism.

It belongs to the aldehyde dehydrogenase family. In terms of assembly, dimer of dimers. The cofactor is K(+).

The catalysed reaction is betaine aldehyde + NAD(+) + H2O = glycine betaine + NADH + 2 H(+). Its pathway is amine and polyamine biosynthesis; betaine biosynthesis via choline pathway; betaine from betaine aldehyde: step 1/1. Its function is as follows. Involved in the biosynthesis of the osmoprotectant glycine betaine. Catalyzes the irreversible oxidation of betaine aldehyde to the corresponding acid. The polypeptide is Betaine aldehyde dehydrogenase (Pseudomonas savastanoi pv. phaseolicola (strain 1448A / Race 6) (Pseudomonas syringae pv. phaseolicola (strain 1448A / Race 6))).